We begin with the raw amino-acid sequence, 479 residues long: FNRXSPGLQGVSSVPLRTYADQPIDADVTVIGSGPGGYVAAIKAAQLGFKTVCIEKNETLGGTCLNVGCIPSKALLNNSHYYHLAHGKDFASRGIELSEVRLNLEKMMEQKSSAVKALTGGIAHLFKQNKVVHVNGFGNITGKNQVTATKADGSSQVIGTKNILIATGSEVTPFPGITIDEDTIVSSTGALSLKKVPEKLVVIGAGVIGVELGSVWQRLGAEVTAVEFLGHVGGIGIDMEISKKFQRILQKQGFKFKLNPKVPGATKRSDGKIDVSVEAAPGGKAEVIPCDVLLVCIGRRPFTQNLGLEELGIELDPRGRIPVNTRFQTKIPNIYAIGDVVAGPMLAHKAEDEGIICVEGMAGGAVHIDYNCVPSVIYTHPEVAWVGKSEEQLKEEGIEYKVGKFPFAANSRAKTNADTDGMVKILGQKSTDRVLGAHILGPGAGEMVNEAALALEYGASCEDIARVCHAHPTLSEAFR.

Residues 1–19 (FNRXSPGLQGVSSVPLRTY) constitute a mitochondrion transit peptide. Position 50 is an N6-acetyllysine; alternate (K50). Residue K50 is modified to N6-succinyllysine; alternate. Residues 55–64 (EKNETLGGTC) and K73 each bind FAD. C64 and C69 form a disulfide bridge. 4 positions are modified to N6-acetyllysine; alternate: K88, K106, K116, and K127. Residues K88, K106, K116, and K127 each carry the N6-succinyllysine; alternate modification. G138 is a binding site for FAD. 2 positions are modified to N6-succinyllysine: K143 and K150. Residue 167–169 (TGS) participates in FAD binding. Residues 204-211 (GAGVIGVE) and E227 each bind NAD(+). An N6-succinyllysine mark is found at K257 and K261. V262 contributes to the NAD(+) binding site. S269 carries the post-translational modification Phosphoserine. G298 provides a ligand contact to NAD(+). K330 bears the N6-acetyllysine mark. Residues D339 and 345-348 (MLAH) contribute to the FAD site. K394 carries the N6-acetyllysine; alternate modification. K394 is modified (N6-succinyllysine; alternate). 2 positions are modified to N6-acetyllysine: K401 and K404. K414 bears the N6-succinyllysine mark. H471 serves as the catalytic Proton acceptor.

It belongs to the class-I pyridine nucleotide-disulfide oxidoreductase family. Homodimer. Part of the multimeric pyruvate dehydrogenase complex that contains multiple copies of pyruvate dehydrogenase (subunits PDHA (PDHA1 or PDHA2) and PDHB, E1), dihydrolipoamide acetyltransferase (DLAT, E2) and lipoamide dehydrogenase (DLD, E3). These subunits are bound to an inner core composed of about 48 DLAT and 12 PDHX molecules (by non covalent bonds). The 2-oxoglutarate dehydrogenase complex is composed of OGDH (2-oxoglutarate dehydrogenase; E1), DLST (dihydrolipoamide succinyltransferase; E2) and DLD (dihydrolipoamide dehydrogenase; E3). It contains multiple copies of the three enzymatic components (E1, E2 and E3). In the nucleus, the 2-oxoglutarate dehydrogenase complex associates with KAT2A. Interacts with PDHX. Requires FAD as cofactor. Tyrosine phosphorylated. Expressed in testis (at protein level).

The protein localises to the mitochondrion matrix. It is found in the nucleus. Its subcellular location is the cell projection. The protein resides in the cilium. It localises to the flagellum. The protein localises to the cytoplasmic vesicle. It is found in the secretory vesicle. Its subcellular location is the acrosome. It carries out the reaction N(6)-[(R)-dihydrolipoyl]-L-lysyl-[protein] + NAD(+) = N(6)-[(R)-lipoyl]-L-lysyl-[protein] + NADH + H(+). Lipoamide dehydrogenase is a component of the glycine cleavage system as well as an E3 component of three alpha-ketoacid dehydrogenase complexes (pyruvate-, alpha-ketoglutarate-, and branched-chain amino acid-dehydrogenase complex). The 2-oxoglutarate dehydrogenase complex is mainly active in the mitochondrion. A fraction of the 2-oxoglutarate dehydrogenase complex also localizes in the nucleus and is required for lysine succinylation of histones: associates with KAT2A on chromatin and provides succinyl-CoA to histone succinyltransferase KAT2A. In monomeric form may have additional moonlighting function as serine protease. Involved in the hyperactivation of spermatazoa during capacitation and in the spermatazoal acrosome reaction. This Mesocricetus auratus (Golden hamster) protein is Dihydrolipoyl dehydrogenase, mitochondrial (DLD).